A 65-amino-acid chain; its full sequence is MEGSKRKHDSRRPQQEQEQPRPRTPPSYEEIAKYGHSFNVKRFTNEEMCLKNDYPRIISYNPPPK.

A compositionally biased stretch (basic residues) spans 1 to 10 (MEGSKRKHDS). Residues 1–29 (MEGSKRKHDSRRPQQEQEQPRPRTPPSYE) are disordered. Over residues 11 to 21 (RRPQQEQEQPR) the composition is skewed to basic and acidic residues.

It belongs to the orthopoxvirus OPG052 family.

The protein is Protein OPG052 (OPG052) of Homo sapiens (Human).